The sequence spans 450 residues: MIKIIIGVVVLGIVVLFHELGHFVAALWCRVEVLSFSVGMGPVLFRKKFGKTEYRLSMLPLGGYCGMKGEQAFQTALDQKLSRIPVEPGSLYAVGPLKRMGIAFAGPLANVLMAVMVLALVSALGSRVHTFGNRISPVYVYDSSDNSPARRVGLQDGDTILRIGDQPIRYFSDIQKIVSQHAQRALPFVIERRGQLMHVTITPDRDAHTGMGRVGIYHYVPLVVAAVDAHGAASRAGLEPEDKILAVAGRRVQHAVQLLALLKEFRKKSVVLTVLRSGKRRYHTIALVRTENGAIDVGIEWKAHTVVIPGTSFFASVRAGIAETLRMCVLTVKGIGMLFRGLQFQQAISGPLRITHVIGDVAQHGFQESFLTGLSQLCEFVALVCVSLFIMNLLPIPILDGGLILFACVELFMQRSIHPRVLYYLQFVGFAFVALIFLCAFWNDVNFLFH.

Histidine 18 contributes to the Zn(2+) binding site. Glutamate 19 is a catalytic residue. Histidine 22 contacts Zn(2+). Residues 102–124 traverse the membrane as a helical segment; the sequence is IAFAGPLANVLMAVMVLALVSAL. In terms of domain architecture, PDZ spans 200–278; sequence TITPDRDAHT…SVVLTVLRSG (79 aa). 2 helical membrane-spanning segments follow: residues 384–406 and 421–443; these read VCVS…LILF and VLYY…AFWN.

It belongs to the peptidase M50B family. Zn(2+) serves as cofactor.

The protein localises to the cell inner membrane. In Treponema pallidum (strain Nichols), this protein is Putative zinc metalloprotease TP_0600.